Reading from the N-terminus, the 548-residue chain is NAD(P)H-quinone oxidoreductase chain 4 (548 aa).

The next 14 membrane-spanning stretches (helical) occupy residues 17–37, 48–68, 103–123, 127–147, 149–169, 181–201, 222–242, 256–276, 290–310, 327–347, 348–368, 389–409, 430–450, and 477–497; these read VPWLSLSILVPIGGALLIPFI, WYALIVTLITFLITVAAYLTG, LILLTSFITSLACLAAWPVTF, LFFFLLLAMDGGQIAVFAVQD, LLFFLAWELELLPVYLLLAIW, FILYTAGSSLFILLAALAMGF, GFQLLCYAGLLIAFGVKLPIV, TAPVHMLLAGILLKMGGYALL, FAPLLIVLGVVNIIYAALTSF, MGFVLIGIGSFSVLGSSGAML, QMISHGLIGASLFFLVGATYD, FALWTVCALASLALPGMSGFV, VVICGLAAVGVVLTPVYLLSM, and VYIIGCLLVPIIGIGLYPRLM.

This sequence belongs to the complex I subunit 4 family.

The protein resides in the cellular thylakoid membrane. It carries out the reaction a plastoquinone + NADH + (n+1) H(+)(in) = a plastoquinol + NAD(+) + n H(+)(out). It catalyses the reaction a plastoquinone + NADPH + (n+1) H(+)(in) = a plastoquinol + NADP(+) + n H(+)(out). Functionally, NDH-1 shuttles electrons from NAD(P)H, via FMN and iron-sulfur (Fe-S) centers, to quinones in the respiratory chain. The immediate electron acceptor for the enzyme in this species is believed to be plastoquinone. Couples the redox reaction to proton translocation (for every two electrons transferred, four hydrogen ions are translocated across the cytoplasmic membrane), and thus conserves the redox energy in a proton gradient. This is NAD(P)H-quinone oxidoreductase chain 4 from Synechococcus sp. (strain CC9902).